Reading from the N-terminus, the 158-residue chain is Putative ribosomal RNA large subunit methyltransferase H (158 aa).

S-adenosyl-L-methionine is bound by residues Leu-76, Gly-107, and 126-131 (LSRMTF).

This sequence belongs to the RNA methyltransferase RlmH family.

The protein resides in the cytoplasm. It carries out the reaction pseudouridine(1915) in 23S rRNA + S-adenosyl-L-methionine = N(3)-methylpseudouridine(1915) in 23S rRNA + S-adenosyl-L-homocysteine + H(+). Its function is as follows. Specifically methylates the pseudouridine at position 1915 (m3Psi1915) in 23S rRNA. This chain is Putative ribosomal RNA large subunit methyltransferase H, found in Methanocorpusculum labreanum (strain ATCC 43576 / DSM 4855 / Z).